A 422-amino-acid polypeptide reads, in one-letter code: Beta-1,3-galactosyltransferase 2 (422 aa).

Topologically, residues 1 to 24 are cytoplasmic; the sequence is MLQWRRRHCCFAKMTWNAKRSLFR. The chain crosses the membrane as a helical; Signal-anchor for type II membrane protein span at residues 25 to 45; that stretch reads THLIGVLSLVFLFAMFLFFNH. At 46–422 the chain is on the lumenal side; sequence HDWLPGRAGF…AGRYRHRKLH (377 aa). N-linked (GlcNAc...) asparagine glycans are attached at residues Asn-75, Asn-100, Asn-119, Asn-176, and Asn-226. The interval 90–110 is disordered; that stretch reads TLRPQTATNSNNTDLSPQGVT.

The protein belongs to the glycosyltransferase 31 family. Requires Mn(2+) as cofactor. In terms of tissue distribution, detected in heart and brain.

The protein localises to the golgi apparatus membrane. It carries out the reaction an N-acetyl-beta-D-glucosaminyl derivative + UDP-alpha-D-galactose = a beta-D-galactosyl-(1-&gt;3)-N-acetyl-beta-D-glucosaminyl derivative + UDP + H(+). The enzyme catalyses a beta-D-GlcNAc-(1-&gt;3)-beta-D-Gal-(1-&gt;4)-beta-D-Glc-(1&lt;-&gt;1)-Cer(d18:1(4E)) + UDP-alpha-D-galactose = a beta-D-Gal-(1-&gt;3)-beta-D-GlcNAc-(1-&gt;3)-beta-D-Gal-(1-&gt;4)-beta-D-Glc-(1&lt;-&gt;1')-Cer(d18:1(4E)) + UDP + H(+). It catalyses the reaction a neolactoside IV(3)-beta-GlcNAc-nLc4Cer(d18:1(4E)) + UDP-alpha-D-galactose = a neolactoside IV(3)-beta-[Gal-beta-(1-&gt;3)-GlcNAc]-nLc4Cer(d18:1(4E)) + UDP + H(+). Its pathway is protein modification; protein glycosylation. In terms of biological role, beta-1,3-galactosyltransferase that transfers galactose from UDP-galactose to substrates with a terminal beta-N-acetylglucosamine (beta-GlcNAc) residue. Can also utilize substrates with a terminal galactose residue, albeit with lower efficiency. Involved in the biosynthesis of the carbohydrate moieties of glycolipids and glycoproteins. Inactive towards substrates with terminal alpha-N-acetylglucosamine (alpha-GlcNAc) or alpha-N-acetylgalactosamine (alpha-GalNAc) residues. This is Beta-1,3-galactosyltransferase 2 from Homo sapiens (Human).